A 175-amino-acid polypeptide reads, in one-letter code: Deoxyuridine 5'-triphosphate nucleotidohydrolase (175 aa).

Residues 67-69 (RSG), N80, 84-86 (TVD), and K94 contribute to the substrate site. Positions 138–175 (RAEGGFGSTGGHAAVGADTNGQQGGNRYASVVSDRKGQ) are disordered.

This sequence belongs to the dUTPase family. It depends on Mg(2+) as a cofactor.

The enzyme catalyses dUTP + H2O = dUMP + diphosphate + H(+). It participates in pyrimidine metabolism; dUMP biosynthesis; dUMP from dCTP (dUTP route): step 2/2. Its function is as follows. This enzyme is involved in nucleotide metabolism: it produces dUMP, the immediate precursor of thymidine nucleotides and it decreases the intracellular concentration of dUTP so that uracil cannot be incorporated into DNA. The protein is Deoxyuridine 5'-triphosphate nucleotidohydrolase of Streptomyces avermitilis (strain ATCC 31267 / DSM 46492 / JCM 5070 / NBRC 14893 / NCIMB 12804 / NRRL 8165 / MA-4680).